Reading from the N-terminus, the 104-residue chain is UPF0145 protein GTNG_1265 (104 aa).

It belongs to the UPF0145 family.

The protein is UPF0145 protein GTNG_1265 of Geobacillus thermodenitrificans (strain NG80-2).